The chain runs to 374 residues: dTDP-3-amino-3,4,6-trideoxy-alpha-D-glucose transaminase (374 aa).

Pyridoxal 5'-phosphate-binding positions include G60, Q160, S181–K186, Y214, Y221, N229–R231, and Y316. An N6-(pyridoxal phosphate)lysine modification is found at K186.

The protein belongs to the degT/dnrJ/eryC1 family. It depends on pyridoxal 5'-phosphate as a cofactor.

The enzyme catalyses dTDP-3-amino-3,4,6-trideoxy-alpha-D-glucose + 2-oxoglutarate = dTDP-3-dehydro-4,6-dideoxy-alpha-D-glucose + L-glutamate. The protein operates within antibiotic biosynthesis. In terms of biological role, involved in the biosynthesis of the amino sugar dTDP-L-megosamine which is found in the macrolide antibiotic and antiparasitic megalomicin A. Catalyzes the reversible transfer of the amino group from L-glutamate to the C-3 position of dTDP-3-keto-4,6-deoxyglucose to yield dTDP-3-amino-3,4,6-trideoxyglucose. This is dTDP-3-amino-3,4,6-trideoxy-alpha-D-glucose transaminase from Micromonospora megalomicea subsp. nigra.